The sequence spans 193 residues: Acyl carrier protein phosphodiesterase (193 aa).

This sequence belongs to the AcpH family.

It catalyses the reaction holo-[ACP] + H2O = apo-[ACP] + (R)-4'-phosphopantetheine + H(+). Converts holo-ACP to apo-ACP by hydrolytic cleavage of the phosphopantetheine prosthetic group from ACP. The chain is Acyl carrier protein phosphodiesterase from Salmonella paratyphi A (strain ATCC 9150 / SARB42).